The primary structure comprises 129 residues: Small ribosomal subunit protein uS11 (129 aa).

It belongs to the universal ribosomal protein uS11 family. Part of the 30S ribosomal subunit. Interacts with proteins S7 and S18. Binds to IF-3.

Functionally, located on the platform of the 30S subunit, it bridges several disparate RNA helices of the 16S rRNA. Forms part of the Shine-Dalgarno cleft in the 70S ribosome. In Pseudomonas putida (strain GB-1), this protein is Small ribosomal subunit protein uS11.